Consider the following 471-residue polypeptide: Probable pyruvate, phosphate dikinase regulatory protein, chloroplastic (471 aa).

Residues 1–49 constitute a chloroplast transit peptide; sequence MSSSSSTSPRFGSMISAKLASPPPSLLLPPSPRLQGRRLTPPSCTPGTP. Residues 1–133 form a disordered region; sequence MSSSSSTSPR…PHPSSDEAAS (133 aa). The span at 21-32 shows a compositional bias: pro residues; sequence SPPPSLLLPPSP. Polar residues predominate over residues 71-88; it reads GSATTPRSPAQLGSSQLH. Residues 89-99 show a composition bias toward basic residues; the sequence is RWSRARAHRSG. Basic and acidic residues predominate over residues 100–111; that stretch reads RRLEWPTIRDRG. 171–178 is a binding site for ADP; sequence HSVNAALG.

Belongs to the pyruvate, phosphate/water dikinase regulatory protein family. PDRP subfamily.

The protein resides in the plastid. It localises to the chloroplast. The enzyme catalyses N(tele)-phospho-L-histidyl/L-threonyl-[pyruvate, phosphate dikinase] + ADP = N(tele)-phospho-L-histidyl/O-phospho-L-threonyl-[pyruvate, phosphate dikinase] + AMP + H(+). It catalyses the reaction N(tele)-phospho-L-histidyl/O-phospho-L-threonyl-[pyruvate, phosphate dikinase] + phosphate + H(+) = N(tele)-phospho-L-histidyl/L-threonyl-[pyruvate, phosphate dikinase] + diphosphate. With respect to regulation, regulated by light/dark exposure. Its function is as follows. Bifunctional serine/threonine kinase and phosphorylase involved in the dark/light-mediated regulation of PPDK by catalyzing its phosphorylation/dephosphorylation. Dark/light-induced changes in stromal concentrations of the competing ADP and Pi substrates govern the direction of the reaction. In the dark, phosphorylates the catalytic intermediate of PPDK (PPDK-HisP), inactivating it. Light exposure induces the phosphorolysis reaction that reactivates PPDK. This chain is Probable pyruvate, phosphate dikinase regulatory protein, chloroplastic (PDRP1), found in Oryza sativa subsp. indica (Rice).